The primary structure comprises 208 residues: Sodium/potassium-transporting ATPase subunit beta-1-interacting protein 2 (208 aa).

4 helical membrane-spanning segments follow: residues 1-23 (MGYC…CVLE), 35-55 (APIL…FGTI), 64-84 (GYAV…CFYL), and 148-168 (VAHS…ACYV).

The protein belongs to the NKAIN family. In terms of assembly, interacts with ATP1B1. As to expression, detected in the brain only and specifically in neurons; expressed in multiple regions such as cerebral cortex, thalamus, cerebellum, olfactory bulb and brainstem, but not in the hippocampus.

The protein resides in the cell membrane. The sequence is that of Sodium/potassium-transporting ATPase subunit beta-1-interacting protein 2 (Nkain2) from Mus musculus (Mouse).